The primary structure comprises 660 residues: Probable beta-hexosaminidase fdl (660 aa).

Positions 1 to 36 (MSLAVSLRRALLVLLTGAIFILTVLYWNQGVTKAQA) are cleaved as a signal peptide. N-linked (GlcNAc...) asparagine glycans are attached at residues asparagine 210, asparagine 412, and asparagine 452.

The protein belongs to the glycosyl hydrolase 20 family. In third instar larval and early pupal brains, expressed in cells sending projections across the interhemispheric junction. In adult brain, expressed in mushroom body, ellipsoid body and pars intercerebralis.

The enzyme catalyses Hydrolysis of terminal non-reducing N-acetyl-D-hexosamine residues in N-acetyl-beta-D-hexosaminides.. Its function is as follows. Involved in brain restructurization via hormonal control during metamorphosis. Implicated in N-glycan processing. The polypeptide is Probable beta-hexosaminidase fdl (fdl) (Drosophila melanogaster (Fruit fly)).